Here is a 99-residue protein sequence, read N- to C-terminus: Integration host factor subunit alpha (99 aa).

The tract at residues 49 to 70 is disordered; it reads FGNFDLRDKNQRPGRNPKTGED.

Belongs to the bacterial histone-like protein family. Heterodimer of an alpha and a beta chain.

This protein is one of the two subunits of integration host factor, a specific DNA-binding protein that functions in genetic recombination as well as in transcriptional and translational control. This is Integration host factor subunit alpha from Cronobacter sakazakii (strain ATCC BAA-894) (Enterobacter sakazakii).